A 299-amino-acid chain; its full sequence is MASLLRPTPLLSTPRKLTHSHLHTSISFPFQISTQRKPQKHLLNLCRSTPTPSQQKASQRKRTRYRKQYPGENIGITEEMRFVAMRLRNVNGKKLDLSEDKTDTEKEEEEEEEDDDDDDEVKEETWKPSKEGFLKYLVDSKLVFDTIERIVDESENVSYAYFRRTGLERCESIEKDLQWLREQDLVIPEPSNVGVSYAKYLEEQAGESAPLFLSHFYSIYFSHIAGGQVLVRQVSEKLLEGKELEFNRWEGDAQDLLKGVREKLNVLGEHWSRDEKNKCLKETAKAFKYMGQIVRLIIL.

The segment covering 1-15 has biased composition (low complexity); it reads MASLLRPTPLLSTPR. Disordered regions lie at residues 1–20, 45–70, and 96–126; these read MASL…LTHS, LCRS…KQYP, and DLSE…EETW. Residues 1-83 constitute a chloroplast transit peptide; it reads MASLLRPTPL…IGITEEMRFV (83 aa). Positions 46–57 are enriched in polar residues; the sequence is CRSTPTPSQQKA. Basic residues predominate over residues 58–67; that stretch reads SQRKRTRYRK. A compositionally biased stretch (acidic residues) spans 105–122; sequence EKEEEEEEEDDDDDDEVK.

It belongs to the heme oxygenase family. In terms of tissue distribution, widely expressed at low levels.

It localises to the plastid. The protein localises to the chloroplast. Probable inactive heme oxygenase. Binds protoporphyrin IX, a precursor for both heme and chlorophyll biosynthesis. Plays a minor role in phytochrome assembly and photomorphogenesis. In Arabidopsis thaliana (Mouse-ear cress), this protein is Probable inactive heme oxygenase 2, chloroplastic (HO2).